The primary structure comprises 188 residues: Elongation factor P (188 aa).

The residue at position 34 (lysine 34) is an N6-(3,6-diaminohexanoyl)-5-hydroxylysine.

The protein belongs to the elongation factor P family. In terms of processing, may be beta-lysylated on the epsilon-amino group of Lys-34 by the combined action of EpmA and EpmB, and then hydroxylated on the C5 position of the same residue by EpmC (if this protein is present). Lysylation is critical for the stimulatory effect of EF-P on peptide-bond formation. The lysylation moiety may extend toward the peptidyltransferase center and stabilize the terminal 3-CCA end of the tRNA. Hydroxylation of the C5 position on Lys-34 may allow additional potential stabilizing hydrogen-bond interactions with the P-tRNA.

It is found in the cytoplasm. The protein operates within protein biosynthesis; polypeptide chain elongation. Involved in peptide bond synthesis. Alleviates ribosome stalling that occurs when 3 or more consecutive Pro residues or the sequence PPG is present in a protein, possibly by augmenting the peptidyl transferase activity of the ribosome. Modification of Lys-34 is required for alleviation. This is Elongation factor P from Sodalis glossinidius (strain morsitans).